Consider the following 211-residue polypeptide: Thiamine-phosphate synthase (211 aa).

4-amino-2-methyl-5-(diphosphooxymethyl)pyrimidine is bound by residues 37–41 and Asn69; that span reads QLRIK. Asp70 and Asp89 together coordinate Mg(2+). Residue Ser108 coordinates 4-amino-2-methyl-5-(diphosphooxymethyl)pyrimidine. Residue 134-136 coordinates 2-[(2R,5Z)-2-carboxy-4-methylthiazol-5(2H)-ylidene]ethyl phosphate; that stretch reads TQT. Residue Lys137 participates in 4-amino-2-methyl-5-(diphosphooxymethyl)pyrimidine binding. 2-[(2R,5Z)-2-carboxy-4-methylthiazol-5(2H)-ylidene]ethyl phosphate contacts are provided by residues Gly166 and 186-187; that span reads VS.

Belongs to the thiamine-phosphate synthase family. It depends on Mg(2+) as a cofactor.

The catalysed reaction is 2-[(2R,5Z)-2-carboxy-4-methylthiazol-5(2H)-ylidene]ethyl phosphate + 4-amino-2-methyl-5-(diphosphooxymethyl)pyrimidine + 2 H(+) = thiamine phosphate + CO2 + diphosphate. The enzyme catalyses 2-(2-carboxy-4-methylthiazol-5-yl)ethyl phosphate + 4-amino-2-methyl-5-(diphosphooxymethyl)pyrimidine + 2 H(+) = thiamine phosphate + CO2 + diphosphate. It catalyses the reaction 4-methyl-5-(2-phosphooxyethyl)-thiazole + 4-amino-2-methyl-5-(diphosphooxymethyl)pyrimidine + H(+) = thiamine phosphate + diphosphate. It functions in the pathway cofactor biosynthesis; thiamine diphosphate biosynthesis; thiamine phosphate from 4-amino-2-methyl-5-diphosphomethylpyrimidine and 4-methyl-5-(2-phosphoethyl)-thiazole: step 1/1. In terms of biological role, condenses 4-methyl-5-(beta-hydroxyethyl)thiazole monophosphate (THZ-P) and 2-methyl-4-amino-5-hydroxymethyl pyrimidine pyrophosphate (HMP-PP) to form thiamine monophosphate (TMP). The sequence is that of Thiamine-phosphate synthase from Shigella dysenteriae serotype 1 (strain Sd197).